Consider the following 220-residue polypeptide: Large ribosomal subunit protein uL16 (220 aa).

The protein belongs to the universal ribosomal protein uL16 family. As to quaternary structure, component of the small ribosomal subunit. Mature ribosomes consist of a small (40S) and a large (60S) subunit. The 40S subunit contains about 33 different proteins and 1 molecule of RNA (18S). The 60S subunit contains about 49 different proteins and 3 molecules of RNA (25S, 5.8S and 5S).

This Vitis riparia (Frost grape) protein is Large ribosomal subunit protein uL16 (RPL10).